The primary structure comprises 268 residues: Phosphatidylglycerol--prolipoprotein diacylglyceryl transferase (268 aa).

The next 4 helical transmembrane spans lie at 14–34, 57–77, 90–110, and 117–137; these read LGPI…FAGW, LTFY…IIFY, FFLW…LIAF, and IGAN…IGLG. Arg140 lines the a 1,2-diacyl-sn-glycero-3-phospho-(1'-sn-glycerol) pocket. 3 helical membrane passes run 174 to 194, 200 to 220, and 238 to 258; these read QLFE…LVTI, YLVL…CEFF, and GQIL…AVFI.

Belongs to the Lgt family.

The protein resides in the cell inner membrane. It carries out the reaction L-cysteinyl-[prolipoprotein] + a 1,2-diacyl-sn-glycero-3-phospho-(1'-sn-glycerol) = an S-1,2-diacyl-sn-glyceryl-L-cysteinyl-[prolipoprotein] + sn-glycerol 1-phosphate + H(+). It functions in the pathway protein modification; lipoprotein biosynthesis (diacylglyceryl transfer). In terms of biological role, catalyzes the transfer of the diacylglyceryl group from phosphatidylglycerol to the sulfhydryl group of the N-terminal cysteine of a prolipoprotein, the first step in the formation of mature lipoproteins. This is Phosphatidylglycerol--prolipoprotein diacylglyceryl transferase from Francisella tularensis subsp. novicida (strain U112).